The sequence spans 92 residues: Small ribosomal subunit protein uS19 (92 aa).

Belongs to the universal ribosomal protein uS19 family.

Functionally, protein S19 forms a complex with S13 that binds strongly to the 16S ribosomal RNA. In Thermosynechococcus vestitus (strain NIES-2133 / IAM M-273 / BP-1), this protein is Small ribosomal subunit protein uS19.